The following is a 42-amino-acid chain: Large ribosomal subunit protein bL36 (42 aa).

The protein belongs to the bacterial ribosomal protein bL36 family.

The chain is Large ribosomal subunit protein bL36 from Wolbachia sp. subsp. Brugia malayi (strain TRS).